The following is a 440-amino-acid chain: Na(+)/H(+) antiporter NhaA (440 aa).

11 helical membrane-spanning segments follow: residues 25 to 45, 76 to 96, 112 to 132, 141 to 161, 170 to 190, 194 to 214, 225 to 245, 312 to 332, 345 to 365, 378 to 398, and 414 to 434; these read FLHI…VALV, LHHV…GLEV, TLPI…YLSM, GWGI…AILG, VLLL…IAIG, SLDG…HFLS, VIVG…ATLI, HPWT…GVLI, VVIG…WLVI, WPIL…ALFI, and GVLV…LWTL.

The protein belongs to the NhaA Na(+)/H(+) (TC 2.A.33) antiporter family.

Its subcellular location is the cell inner membrane. The enzyme catalyses Na(+)(in) + 2 H(+)(out) = Na(+)(out) + 2 H(+)(in). Na(+)/H(+) antiporter that extrudes sodium in exchange for external protons. This chain is Na(+)/H(+) antiporter NhaA, found in Rhodopirellula baltica (strain DSM 10527 / NCIMB 13988 / SH1).